Consider the following 115-residue polypeptide: MANKQNYYELYRKSTIGEALTDTLEELLINQYISNSLYQKILTQFDKTINEALSNTVKAKTTFKGSLHTYRFCDSVWTFILENAQFKTEANEIVKVDRVKIVACDANVQDAPPPK.

This sequence belongs to the TFIIA subunit 2 family. TFIIA is a heterodimer of the large unprocessed subunit 1 and a small subunit gamma.

It is found in the nucleus. Functionally, TFIIA is a component of the transcription machinery of RNA polymerase II and plays an important role in transcriptional activation. TFIIA in a complex with tbp mediates transcriptional activity. The sequence is that of Transcription initiation factor IIA subunit 2 (gtf2a2) from Dictyostelium discoideum (Social amoeba).